The chain runs to 493 residues: Rho guanine nucleotide exchange factor 9 (493 aa).

The SH3 domain occupies 15 to 74; that stretch reads DSIVSAEAVWDHVTMANRGVAFKAGDVIKVLDASNKDWWWGQIDDEEGWFPASFVRLWVN. The tract at residues 107 to 117 is interaction with GPHN; the sequence is RDQMRANVINE. The DH domain occupies 110-294; the sequence is MRANVINEIM…RNVTQQINER (185 aa). Positions 325-432 constitute a PH domain; it reads ELIYTGEMAW…WLRAFREERK (108 aa). The tract at residues 453 to 473 is disordered; sequence AMTVRKASKQKGRVGEEENQS.

Interacts with GPHN. In terms of tissue distribution, detected in brain, throughout the gray matter. Detected at low levels in heart and skeletal muscle.

It is found in the cytoplasm. Its subcellular location is the postsynaptic density. In terms of biological role, acts as a guanine nucleotide exchange factor (GEF) for CDC42. Promotes formation of GPHN clusters. The sequence is that of Rho guanine nucleotide exchange factor 9 (Arhgef9) from Rattus norvegicus (Rat).